A 217-amino-acid chain; its full sequence is uncharacterized protein (217 aa).

7 helical membrane passes run 4 to 23, 44 to 66, 76 to 98, 111 to 128, 132 to 154, 166 to 188, and 198 to 215; these read IYGI…GKET, NVVI…LTWV, TVET…SIII, FLYL…IHAI, MAMV…PLAL, AGTA…IVLF, and LLLS…ALQL.

The protein localises to the cell membrane. This is an uncharacterized protein from Archaeoglobus fulgidus (strain ATCC 49558 / DSM 4304 / JCM 9628 / NBRC 100126 / VC-16).